The chain runs to 74 residues: uncharacterized protein (74 aa).

This is an uncharacterized protein from Staphylococcus aureus.